The following is a 356-amino-acid chain: Peptide chain release factor 1 (356 aa).

At glutamine 233 the chain carries N5-methylglutamine.

This sequence belongs to the prokaryotic/mitochondrial release factor family. Post-translationally, methylated by PrmC. Methylation increases the termination efficiency of RF1.

The protein resides in the cytoplasm. Its function is as follows. Peptide chain release factor 1 directs the termination of translation in response to the peptide chain termination codons UAG and UAA. In Halalkalibacterium halodurans (strain ATCC BAA-125 / DSM 18197 / FERM 7344 / JCM 9153 / C-125) (Bacillus halodurans), this protein is Peptide chain release factor 1.